Here is a 195-residue protein sequence, read N- to C-terminus: Small ribosomal subunit protein uS4c (195 aa).

The 62-residue stretch at 82–143 (MRLDNILFRL…KQRSKALIQN (62 aa)) folds into the S4 RNA-binding domain.

It belongs to the universal ribosomal protein uS4 family. In terms of assembly, part of the 30S ribosomal subunit. Contacts protein S5. The interaction surface between S4 and S5 is involved in control of translational fidelity.

The protein resides in the plastid. The protein localises to the chloroplast. In terms of biological role, one of the primary rRNA binding proteins, it binds directly to 16S rRNA where it nucleates assembly of the body of the 30S subunit. With S5 and S12 plays an important role in translational accuracy. The polypeptide is Small ribosomal subunit protein uS4c (rps4) (Pillansia templemannii).